The chain runs to 367 residues: MAHADLATEQSLRSEIDRTDHNRRQIRGWLAVVLFALFALVIVGGATRLTESGLSITEWKPIHGVIPPLSAEEWEEEFRLYQRIPQYEQMNKGMTVEAFKTIFWWEWAHRLLARSIGVIFALPLLFFWLTGRVERRLRLPLLGILALGGFQGFIGWWMVSSGLVERTEVSQYRLATHLVIACLIFAACMWIYRGLSPHTGDAAPTQRSQTMAGIIAAMSLFQIYLGALVAGLDAGLSYNTWPLMDGAIVPGDLFVQQPAWINLFENPKTVQFLHRAGAYLLFALAFAHMVVSLRAASGTTHARRSVLLFVLLTVQAAIGITTLLLQVPIVWGVLHQAGALVVLGFAIAHWRGFVGEYPRPAAIEVRH.

5 helical membrane passes run 26 to 46 (IRGW…VGGA), 111 to 131 (LLAR…WLTG), 139 to 159 (LPLL…WWMV), 174 to 194 (LATH…IYRG), and 212 to 232 (AGII…VAGL). H274 is a heme binding site. 3 helical membrane-spanning segments follow: residues 276-296 (AGAY…LRAA), 305-325 (SVLL…TLLL), and 327-347 (VPIV…GFAI). Residue H335 coordinates heme.

The protein belongs to the COX15/CtaA family. Type 2 subfamily. In terms of assembly, interacts with CtaB. Requires heme b as cofactor.

It is found in the cell membrane. It carries out the reaction Fe(II)-heme o + 2 A + H2O = Fe(II)-heme a + 2 AH2. It participates in porphyrin-containing compound metabolism; heme A biosynthesis; heme A from heme O: step 1/1. Catalyzes the conversion of heme O to heme A by two successive hydroxylations of the methyl group at C8. The first hydroxylation forms heme I, the second hydroxylation results in an unstable dihydroxymethyl group, which spontaneously dehydrates, resulting in the formyl group of heme A. The chain is Heme A synthase from Sinorhizobium fredii (strain NBRC 101917 / NGR234).